The following is a 297-amino-acid chain: Acetylglutamate kinase (297 aa).

Substrate-binding positions include 64–65, Arg-86, and Asn-190; that span reads GG.

Belongs to the acetylglutamate kinase family. ArgB subfamily.

The protein localises to the cytoplasm. The catalysed reaction is N-acetyl-L-glutamate + ATP = N-acetyl-L-glutamyl 5-phosphate + ADP. It functions in the pathway amino-acid biosynthesis; L-arginine biosynthesis; N(2)-acetyl-L-ornithine from L-glutamate: step 2/4. In terms of biological role, catalyzes the ATP-dependent phosphorylation of N-acetyl-L-glutamate. This is Acetylglutamate kinase from Solidesulfovibrio magneticus (strain ATCC 700980 / DSM 13731 / RS-1) (Desulfovibrio magneticus).